Reading from the N-terminus, the 116-residue chain is Ribosome-binding factor A (116 aa).

Belongs to the RbfA family. Monomer. Binds 30S ribosomal subunits, but not 50S ribosomal subunits or 70S ribosomes.

The protein localises to the cytoplasm. Functionally, one of several proteins that assist in the late maturation steps of the functional core of the 30S ribosomal subunit. Associates with free 30S ribosomal subunits (but not with 30S subunits that are part of 70S ribosomes or polysomes). Required for efficient processing of 16S rRNA. May interact with the 5'-terminal helix region of 16S rRNA. In Streptococcus pneumoniae (strain ATCC BAA-255 / R6), this protein is Ribosome-binding factor A.